Consider the following 639-residue polypeptide: Threonine--tRNA ligase (639 aa).

The 61-residue stretch at Met-1 to Lys-61 folds into the TGS domain. The interval Asp-242–Pro-532 is catalytic. The Zn(2+) site is built by Cys-333, His-384, and His-509.

It belongs to the class-II aminoacyl-tRNA synthetase family. In terms of assembly, homodimer. It depends on Zn(2+) as a cofactor.

The protein localises to the cytoplasm. The catalysed reaction is tRNA(Thr) + L-threonine + ATP = L-threonyl-tRNA(Thr) + AMP + diphosphate + H(+). In terms of biological role, catalyzes the attachment of threonine to tRNA(Thr) in a two-step reaction: L-threonine is first activated by ATP to form Thr-AMP and then transferred to the acceptor end of tRNA(Thr). Also edits incorrectly charged L-seryl-tRNA(Thr). This Clostridioides difficile (strain 630) (Peptoclostridium difficile) protein is Threonine--tRNA ligase.